The primary structure comprises 249 residues: Large ribosomal subunit protein uL16m (249 aa).

This sequence belongs to the universal ribosomal protein uL16 family. As to quaternary structure, component of the mitochondrial large ribosomal subunit (mt-LSU). Mature N.crassa 74S mitochondrial ribosomes consist of a small (37S) and a large (54S) subunit. The 37S small subunit contains a 16S ribosomal RNA (16S mt-rRNA) and 32 different proteins. The 54S large subunit contains a 23S rRNA (23S mt-rRNA) and 42 different proteins.

Its subcellular location is the mitochondrion. Functionally, component of the mitochondrial ribosome (mitoribosome), a dedicated translation machinery responsible for the synthesis of mitochondrial genome-encoded proteins, including at least some of the essential transmembrane subunits of the mitochondrial respiratory chain. The mitoribosomes are attached to the mitochondrial inner membrane and translation products are cotranslationally integrated into the membrane. In Neurospora crassa (strain ATCC 24698 / 74-OR23-1A / CBS 708.71 / DSM 1257 / FGSC 987), this protein is Large ribosomal subunit protein uL16m (mrpl16).